A 166-amino-acid polypeptide reads, in one-letter code: Probable chemoreceptor glutamine deamidase CheD 1 (166 aa).

It belongs to the CheD family.

The catalysed reaction is L-glutaminyl-[protein] + H2O = L-glutamyl-[protein] + NH4(+). Its function is as follows. Probably deamidates glutamine residues to glutamate on methyl-accepting chemotaxis receptors (MCPs), playing an important role in chemotaxis. The protein is Probable chemoreceptor glutamine deamidase CheD 1 of Leptospira interrogans serogroup Icterohaemorrhagiae serovar copenhageni (strain Fiocruz L1-130).